We begin with the raw amino-acid sequence, 279 residues long: Protein NipSnap homolog 1 (279 aa).

Belongs to the NipSnap family.

It is found in the mitochondrion matrix. Protein involved in mitophagy. Accumulates on the mitochondria surface in response to mitochondrial depolarization and acts as a 'eat me' signal by recruiting proteins involved in selective autophagy. The chain is Protein NipSnap homolog 1 from Danio rerio (Zebrafish).